A 137-amino-acid polypeptide reads, in one-letter code: UBAP1-MVB12-associated (UMA)-domain containing protein 1 (137 aa).

A disordered region spans residues 1–72 (MFHFFRKPPE…VSDPEMENKA (72 aa)). Over residues 32–44 (DEQRMTARGKTSD) the composition is skewed to basic and acidic residues. Positions 50 to 63 (PLETNKENSSSVTV) are enriched in polar residues. Positions 86–134 (LSDVPFTLAPHVLAVQGTITDLPDHLLSYDGSENLSRFWYDFTLENSVL) constitute a UMA domain.

In Homo sapiens (Human), this protein is UBAP1-MVB12-associated (UMA)-domain containing protein 1.